A 466-amino-acid chain; its full sequence is MAEEQDLSEVELSPVGSEEPRCLSPGSAPSLGPDGGGGGSGLRASPGPGELGKVKKEQQDGEADDDKFPVCIREAVSQVLSGYDWTLVPMPVRVNGASKSKPHVKRPMNAFMVWAQAARRKLADQYPHLHNAELSKTLGKLWRLLNESDKRPFIEEAERLRMQHKKDHPDYKYQPRRRKNGKAAQGEAECPGGEAEQGGAAAIQAHYKSAHLDHRHPEEGSPMSDGNPEHPSGQSHGPPTPPTTPKTELQSGKADPKRDGRSLGEGGKPHIDFGNVDIGEISHEVMSNMETFDVTELDQYLPPNGHPGHVGSYSAAGYGLGSALAVASGHSAWISKPPGVALPTVSPPGVDAKAQVKTETTGPQGPPHYTDQPSTSQIAYTSLSLPHYGSAFPSISRPQFDYSDHQPSGPYYGHAGQASGLYSAFSYMGPSQRPLYTAISDPSPSGPQSHSPTHWEQPVYTTLSRP.

5 disordered regions span residues 1 to 67, 160 to 200, 213 to 275, 344 to 375, and 433 to 466; these read MAEE…DDDK, LRMQ…QGGA, DHRH…DFGN, TVSP…QPST, and RPLY…LSRP. Positions 23–32 are enriched in low complexity; sequence LSPGSAPSLG. Ser-24 is subject to Phosphoserine. Residues 62 to 102 form a dimerization (DIM) region; that stretch reads EADDDKFPVCIREAVSQVLSGYDWTLVPMPVRVNGASKSKP. The HMG box DNA-binding region spans 104–172; the sequence is VKRPMNAFMV…QHKKDHPDYK (69 aa). Residues 160–173 are compositionally biased toward basic and acidic residues; sequence LRMQHKKDHPDYKY. Low complexity predominate over residues 183–200; that stretch reads AAQGEAECPGGEAEQGGA. The segment at 228–310 is transactivation domain (TAM); it reads PEHPSGQSHG…LPPNGHPGHV (83 aa). A compositionally biased stretch (basic and acidic residues) spans 254–271; the sequence is ADPKRDGRSLGEGGKPHI. Positions 353–466 are transactivation domain (TAC); the sequence is KAQVKTETTG…QPVYTTLSRP (114 aa). The segment covering 440–466 has biased composition (polar residues); it reads SDPSPSGPQSHSPTHWEQPVYTTLSRP.

As to quaternary structure, monomer. Interacts with Armcx3 at the mitochondrial outer membrane surface. Interacts with PAX3. Expressed in oligodendroglia of the spinal tube (at protein level).

Its subcellular location is the cytoplasm. It is found in the nucleus. The protein resides in the mitochondrion outer membrane. Its function is as follows. Transcription factor that plays a central role in developing and mature glia. Specifically activates expression of myelin genes, during oligodendrocyte (OL) maturation, such as DUSP15 and MYRF, thereby playing a central role in oligodendrocyte maturation and CNS myelination. Once induced, MYRF cooperates with SOX10 to implement the myelination program. Transcriptional activator of MITF, acting synergistically with PAX3. Transcriptional activator of MBP, via binding to the gene promoter. This is Transcription factor SOX-10 (Sox10) from Mus musculus (Mouse).